Consider the following 109-residue polypeptide: LSM2-LSM8 complex subunit LSM8 (109 aa).

One can recognise a Sm domain in the interval 1–70 (MSATLKDYLN…IALVGLIDAE (70 aa)).

Belongs to the snRNP Sm proteins family. Component of the heptameric LSM2-LSM8 complex that forms a seven-membered ring structure with a donut shape; an RNA strand can pass through the hole in the center of the ring structure. The LSm subunits are arranged in the order LSM8, LSM2, LSM3, LSM6, LSM5, LSM7 and LSM4. Component of the spliceosome U4/U6-U5 tri-snRNP complex composed of the U4, U6 and U5 snRNAs and at least PRP3, PRP4, PRP6, PRP8, PRP18, PRP31, PRP38, SNU13, SNU23, SNU66, SNU114, SPP381, SMB1, SMD1, SMD2, SMD3, SMX2, SMX3, LSM2, LSM3, LSM4, LSM5, LSM6, LSM7, LSM8, BRR2 and DIB1.

Its subcellular location is the nucleus. It localises to the cytoplasm. In terms of biological role, component of the nuclear LSM2-LSM8 complex, which is involved in spliceosome assembly. The LSM2-LSM8 complex plays a role in the biogenesis of the spliceosomal U4/U6-U5 tri-snRNP complex by accelerating PRP24-mediated annealing of U4/U6 di-snRNA. The LSM2-LSM8 complex binds U6 snRNA terminating with a non-cyclic 3' phosphate group. LSM2-LSM8 is probably also involved in degradation of nuclear pre-mRNA by targeting them for decapping. LSM2-LSM8 could be involved in processing of pre-tRNAs, pre-rRNAs and U3 snoRNA, although involvement may be indirect. This Saccharomyces cerevisiae (strain ATCC 204508 / S288c) (Baker's yeast) protein is LSM2-LSM8 complex subunit LSM8 (LSM8).